The primary structure comprises 283 residues: Diaminopimelate epimerase (283 aa).

Substrate is bound by residues N13, Q45, and N65. C74 (proton donor) is an active-site residue. Substrate-binding positions include 75–76, N156, N190, and 208–209; these read GN and ER. Catalysis depends on C217, which acts as the Proton acceptor. 218–219 serves as a coordination point for substrate; it reads GS.

The protein belongs to the diaminopimelate epimerase family. Homodimer.

The protein resides in the cytoplasm. The catalysed reaction is (2S,6S)-2,6-diaminopimelate = meso-2,6-diaminopimelate. Its pathway is amino-acid biosynthesis; L-lysine biosynthesis via DAP pathway; DL-2,6-diaminopimelate from LL-2,6-diaminopimelate: step 1/1. In terms of biological role, catalyzes the stereoinversion of LL-2,6-diaminopimelate (L,L-DAP) to meso-diaminopimelate (meso-DAP), a precursor of L-lysine and an essential component of the bacterial peptidoglycan. This Bartonella henselae (strain ATCC 49882 / DSM 28221 / CCUG 30454 / Houston 1) (Rochalimaea henselae) protein is Diaminopimelate epimerase.